The primary structure comprises 341 residues: Tryptophan--tRNA ligase (341 aa).

Residues 11–13 (RPT) and 19–20 (GH) each bind ATP. Residues 12-20 (PTGKLHIGH) carry the 'HIGH' region motif. L-tryptophan is bound at residue Asp140. ATP-binding positions include 152–154 (GTD), Leu194, and 202–206 (KMSKS). The 'KMSKS' region motif lies at 202-206 (KMSKS).

It belongs to the class-I aminoacyl-tRNA synthetase family. In terms of assembly, homodimer.

The protein resides in the cytoplasm. The enzyme catalyses tRNA(Trp) + L-tryptophan + ATP = L-tryptophyl-tRNA(Trp) + AMP + diphosphate + H(+). Functionally, catalyzes the attachment of tryptophan to tRNA(Trp). This is Tryptophan--tRNA ligase from Streptococcus pneumoniae serotype 4 (strain ATCC BAA-334 / TIGR4).